A 106-amino-acid polypeptide reads, in one-letter code: Transcription factor TRY (106 aa).

A Myb-like domain is found at 34-71; sequence TEQEEDLIFRMYRLVGDRWDLIAGRVPGRQPEEIERYW. Residues 83–106 are disordered; sequence RRQLHSSSHKHTKPHRPRFSIYPS. The span at 84–100 shows a compositional bias: basic residues; that stretch reads RQLHSSSHKHTKPHRPR.

In terms of assembly, interacts with GL3 and thus prevents GL1 GL3 interaction. Also interacts with BHLH2. As to expression, expressed in roots, leaves, siliques and inflorescences.

Its subcellular location is the nucleus. Transcription factor. Involved in epidermal cell fate specification. Negative regulator of trichome development, including endoreplication, by lateral inhibition involving intercellular interactions. Promotes the formation of hair developing cells (trichoblasts) in H position in root epidermis, probably by inhibiting non-hair cell (atrichoblasts) formation. This Arabidopsis thaliana (Mouse-ear cress) protein is Transcription factor TRY (TRY).